A 728-amino-acid polypeptide reads, in one-letter code: Polyribonucleotide nucleotidyltransferase (728 aa).

Asp488 and Asp494 together coordinate Mg(2+). Residues 555–614 (PRMITMKIHPDKIREVIGKGGSTIQALTKETGTTIDIQEDGTITIASTSTDGMAEAKRRI) enclose the KH domain. Residues 624–692 (GKIYNGTVLK…EKGRLRLSLK (69 aa)) enclose the S1 motif domain. The disordered stretch occupies residues 702-728 (ISPVNAGEAAPAPAPAAAPATPSDQQQ). A compositionally biased stretch (low complexity) spans 710-721 (AAPAPAPAAAPA).

The protein belongs to the polyribonucleotide nucleotidyltransferase family. The cofactor is Mg(2+).

It localises to the cytoplasm. It catalyses the reaction RNA(n+1) + phosphate = RNA(n) + a ribonucleoside 5'-diphosphate. Involved in mRNA degradation. Catalyzes the phosphorolysis of single-stranded polyribonucleotides processively in the 3'- to 5'-direction. This Cupriavidus pinatubonensis (strain JMP 134 / LMG 1197) (Cupriavidus necator (strain JMP 134)) protein is Polyribonucleotide nucleotidyltransferase.